The chain runs to 339 residues: NADH-quinone oxidoreductase subunit H (339 aa).

Transmembrane regions (helical) follow at residues 9-29 (IFPLIIIALKVVAITIPLILC), 50-70 (PNVVGPFGLLQPIADAVKLLF), 82-102 (ILFILAPMITFILSLIGWAVI), 115-135 (VGVLYILAISSLSVYGIIIAG), 161-181 (MGLVIITVLLTTGTLNLSEII), 187-207 (MPWWIDLMLLPMGVVFFISVL), 235-255 (MGFALFFLGEYANMILVSAMT), 275-295 (IPGFFWFVFKVGFLLFCFLWI), and 311-331 (GWKVFLPLTLFWVVLVSSVLV).

This sequence belongs to the complex I subunit 1 family. In terms of assembly, NDH-1 is composed of 14 different subunits. Subunits NuoA, H, J, K, L, M, N constitute the membrane sector of the complex.

It localises to the cell membrane. The catalysed reaction is a quinone + NADH + 5 H(+)(in) = a quinol + NAD(+) + 4 H(+)(out). NDH-1 shuttles electrons from NADH, via FMN and iron-sulfur (Fe-S) centers, to quinones in the respiratory chain. The immediate electron acceptor for the enzyme in this species is believed to be ubiquinone. Couples the redox reaction to proton translocation (for every two electrons transferred, four hydrogen ions are translocated across the cytoplasmic membrane), and thus conserves the redox energy in a proton gradient. This subunit may bind ubiquinone. The chain is NADH-quinone oxidoreductase subunit H from Rickettsia africae (strain ESF-5).